We begin with the raw amino-acid sequence, 373 residues long: Histidinol-phosphate aminotransferase (373 aa).

N6-(pyridoxal phosphate)lysine is present on Lys-229.

This sequence belongs to the class-II pyridoxal-phosphate-dependent aminotransferase family. Histidinol-phosphate aminotransferase subfamily. It depends on pyridoxal 5'-phosphate as a cofactor.

The enzyme catalyses L-histidinol phosphate + 2-oxoglutarate = 3-(imidazol-4-yl)-2-oxopropyl phosphate + L-glutamate. Its pathway is amino-acid biosynthesis; L-histidine biosynthesis; L-histidine from 5-phospho-alpha-D-ribose 1-diphosphate: step 7/9. In Methanothermobacter thermautotrophicus (strain ATCC 29096 / DSM 1053 / JCM 10044 / NBRC 100330 / Delta H) (Methanobacterium thermoautotrophicum), this protein is Histidinol-phosphate aminotransferase (hisC).